Consider the following 693-residue polypeptide: Auxin response factor 10 (693 aa).

Residues Phe115–Lys217 constitute a DNA-binding region (TF-B3). One can recognise a PB1 domain in the interval Thr580–Thr668.

This sequence belongs to the ARF family. Homodimers and heterodimers. In terms of tissue distribution, expressed in the whole plant.

The protein localises to the nucleus. Functionally, auxin response factors (ARFs) are transcriptional factors that bind specifically to the DNA sequence 5'-TGTCTC-3' found in the auxin-responsive promoter elements (AuxREs). Could act as transcriptional activator or repressor. Formation of heterodimers with Aux/IAA proteins may alter their ability to modulate early auxin response genes expression. In Arabidopsis thaliana (Mouse-ear cress), this protein is Auxin response factor 10 (ARF10).